The following is a 310-amino-acid chain: MEIPHIPVLLNEVQEIFKNLKTGYFLDCTLGFGGHSEALLKNHPDLKFIACDQDQQALEFSKKRLKDFHNRITFIQSNFSEVLEKISYKEELRGILADIGVSSFQLDNNERGFSVNSDFLDMRMNQNSKISAYEIINTYTKEQLTSIFKDYGELHDAHFIAEKICLERSKNPIKSAKELYQIIGKGKQNHRKISKATLAFQAIRIEVNQELKVLKDFLGHLENLKPKNCILAIISFHSLEDRIVKNFFKKWSKNCICDEKIMRCECGNNHSLGQIITKKAISASKEELLKNSRSSCAKMRAFYFNNLDNK.

Residues 33-35, Asp-52, Phe-79, Asp-98, and Gln-105 each bind S-adenosyl-L-methionine; that span reads GGH.

This sequence belongs to the methyltransferase superfamily. RsmH family.

Its subcellular location is the cytoplasm. It carries out the reaction cytidine(1402) in 16S rRNA + S-adenosyl-L-methionine = N(4)-methylcytidine(1402) in 16S rRNA + S-adenosyl-L-homocysteine + H(+). In terms of biological role, specifically methylates the N4 position of cytidine in position 1402 (C1402) of 16S rRNA. This Campylobacter jejuni subsp. jejuni serotype O:6 (strain 81116 / NCTC 11828) protein is Ribosomal RNA small subunit methyltransferase H.